Here is a 135-residue protein sequence, read N- to C-terminus: Large ribosomal subunit protein bL17 (135 aa).

Belongs to the bacterial ribosomal protein bL17 family. Part of the 50S ribosomal subunit. Contacts protein L32.

This Listeria innocua serovar 6a (strain ATCC BAA-680 / CLIP 11262) protein is Large ribosomal subunit protein bL17.